The sequence spans 274 residues: Large ribosomal subunit protein uL2cz/uL2cy (274 aa).

The disordered stretch occupies residues 225 to 274 (NPVDHPHGGGEGRAPIGRKKPTTPWGYPALGRRSRKRKKYSDSFILRRRK).

Belongs to the universal ribosomal protein uL2 family. In terms of assembly, part of the 50S ribosomal subunit.

Its subcellular location is the plastid. It localises to the chloroplast. The chain is Large ribosomal subunit protein uL2cz/uL2cy (rpl2-A) from Dioscorea elephantipes (Elephant's foot yam).